Reading from the N-terminus, the 332-residue chain is Ferredoxin--NADP reductase (332 aa).

Threonine 20, glutamate 39, glutamine 47, tyrosine 52, valine 92, phenylalanine 126, aspartate 288, and serine 329 together coordinate FAD.

Belongs to the ferredoxin--NADP reductase type 2 family. Homodimer. Requires FAD as cofactor.

The catalysed reaction is 2 reduced [2Fe-2S]-[ferredoxin] + NADP(+) + H(+) = 2 oxidized [2Fe-2S]-[ferredoxin] + NADPH. The polypeptide is Ferredoxin--NADP reductase (Geobacillus thermodenitrificans (strain NG80-2)).